The sequence spans 157 residues: Transcriptional regulator MraZ (157 aa).

SpoVT-AbrB domains lie at 7-54 (TYTM…GTSL) and 83-126 (TEML…EPER).

The protein belongs to the MraZ family. Forms oligomers.

The protein localises to the cytoplasm. Its subcellular location is the nucleoid. This Azorhizobium caulinodans (strain ATCC 43989 / DSM 5975 / JCM 20966 / LMG 6465 / NBRC 14845 / NCIMB 13405 / ORS 571) protein is Transcriptional regulator MraZ.